The following is a 734-amino-acid chain: ABC transporter D family member 1 (734 aa).

Helical transmembrane passes span isoleucine 52 to glycine 72, phenylalanine 112 to alanine 132, phenylalanine 177 to tyrosine 197, and threonine 204 to isoleucine 224. The ABC transmembrane type-1 domain occupies proline 63–phenylalanine 351. Residues histidine 271 to glutamate 286 are compositionally biased toward basic and acidic residues. Residues histidine 271–glutamate 296 are disordered. A coiled-coil region spans residues aspartate 332–lysine 359. Residues leucine 374 to leucine 394 traverse the membrane as a helical segment. Residues isoleucine 492–glutamate 729 form the ABC transporter domain. Glycine 525 to serine 532 provides a ligand contact to ATP. A compositionally biased stretch (low complexity) spans glutamine 712 to asparagine 725. A disordered region spans residues glutamine 712–aspartate 734.

The protein belongs to the ABC transporter superfamily. ABCD family. Peroxisomal fatty acyl CoA transporter (TC 3.A.1.203) subfamily.

Its subcellular location is the membrane. The catalysed reaction is (9Z)-octadecenoyl-CoA(in) = (9Z)-octadecenoyl-CoA(out). This Dictyostelium discoideum (Social amoeba) protein is ABC transporter D family member 1 (abcD1).